The sequence spans 497 residues: Cytochrome P450 71A20 (497 aa).

A helical transmembrane segment spans residues 3-23; it reads MILITLCLTTLLALLLKSILK. C440 is a heme binding site.

It belongs to the cytochrome P450 family. It depends on heme as a cofactor.

The protein localises to the membrane. This Arabidopsis thaliana (Mouse-ear cress) protein is Cytochrome P450 71A20 (CYP71A20).